We begin with the raw amino-acid sequence, 452 residues long: Keratin, type I cytoskeletal 42 (452 aa).

The head stretch occupies residues 4–93 (TTSVRQFSTS…GVSDALLGGS (90 aa)). The coil 1A stretch occupies residues 94–129 (EKETMQNLNDRLATYLDRVRALEEANADLEVKIREW). The IF rod domain occupies 94–405 (EKETMQNLND…RLLEGEDAHL (312 aa)). Residues 130–147 (YKKQGPGPARDYSPYFKT) form a linker 1 region. The segment at 148-239 (IEDLRNKILA…KNHEEEMNAL (92 aa)) is coil 1B. The interval 240-262 (RGQVGGDVNVEMDAAPGVDLSRI) is linker 12. Positions 263–401 (LNEMRDQYEK…ATYRRLLEGE (139 aa)) are coil 2. The tail stretch occupies residues 402–452 (DAHLATQYSSSLASQPSREGMVTSRQVRTIVEEVQDGKVVSSREQVHRSTH).

It belongs to the intermediate filament family. In terms of assembly, heterodimer of a type I and a type II keratin. Colocalizes with KRT8/KRT18 filament network. As to expression, expressed in nail matrix and nail bed epithelium (at protein level). Also expressed in tongue and digits with weak expression in vibrissae and in both filiform and fungiform papillae of oral mucosa.

It is found in the cytoplasm. The polypeptide is Keratin, type I cytoskeletal 42 (Mus musculus (Mouse)).